A 608-amino-acid chain; its full sequence is ATP-citrate synthase beta chain protein 1 (608 aa).

Residues 214–234 and 265–291 each bind ATP; these read ILRF…ELGG and FKSE…KNQA. Glu-231 contributes to the Mg(2+) binding site. Residue His-273 is the Tele-phosphohistidine intermediate of the active site. 292–302 contributes to the CoA binding site; that stretch reads LKDAGAVVPTS.

The protein belongs to the succinate/malate CoA ligase alpha subunit family. In terms of assembly, heterooctamer of 4 alpha and 4 beta chains.

The protein resides in the cytoplasm. The protein localises to the cytosol. It catalyses the reaction oxaloacetate + acetyl-CoA + ADP + phosphate = citrate + ATP + CoA. Functionally, ATP citrate-lyase is the primary enzyme responsible for the synthesis of cytosolic acetyl-CoA, used for the elongation of fatty acids and biosynthesis of isoprenoids, flavonoids and malonated derivatives. May supply substrate to the cytosolic acetyl-CoA carboxylase, which generates the malonyl-CoA used for the synthesis of a multitude of compounds, including very long chain fatty acids and flavonoids. In contrast to all known animal ACL enzymes having a homomeric structure, plant ACLs are composed of alpha and beta chains. This chain is ATP-citrate synthase beta chain protein 1 (ACLB-1), found in Oryza sativa subsp. japonica (Rice).